We begin with the raw amino-acid sequence, 116 residues long: Protein Wnt-5a (116 aa).

S1 is lipidated: O-palmitoleoyl serine; by PORCN. Residues N69 and N83 are each glycosylated (N-linked (GlcNAc...) asparagine). Residues C82 and C97 are joined by a disulfide bond.

The protein belongs to the Wnt family. Palmitoleoylation is required for efficient binding to frizzled receptors. Depalmitoleoylation leads to Wnt signaling pathway inhibition.

It is found in the secreted. The protein resides in the extracellular space. The protein localises to the extracellular matrix. Its function is as follows. Ligand for members of the frizzled family of seven transmembrane receptors. Can activate or inhibit canonical Wnt signaling, depending on receptor context. Required during embryogenesis for extension of the primary anterior-posterior axis. The protein is Protein Wnt-5a (WNT5A) of Anser caerulescens (Snow goose).